Here is a 220-residue protein sequence, read N- to C-terminus: UPF0319 protein YccT (220 aa).

An N-terminal signal peptide occupies residues 1 to 20 (MKTGALATFLALCLPATVFA).

This sequence belongs to the UPF0319 family.

The chain is UPF0319 protein YccT from Salmonella heidelberg (strain SL476).